Reading from the N-terminus, the 162-residue chain is NADH-quinone oxidoreductase subunit I (162 aa).

4Fe-4S ferredoxin-type domains are found at residues 53 to 83 (LRRY…IESE) and 93 to 122 (TRYD…ETRV). Cysteine 63, cysteine 66, cysteine 69, cysteine 73, cysteine 102, cysteine 105, cysteine 108, and cysteine 112 together coordinate [4Fe-4S] cluster.

This sequence belongs to the complex I 23 kDa subunit family. NDH-1 is composed of 14 different subunits. Subunits NuoA, H, J, K, L, M, N constitute the membrane sector of the complex. The cofactor is [4Fe-4S] cluster.

The protein localises to the cell inner membrane. It carries out the reaction a quinone + NADH + 5 H(+)(in) = a quinol + NAD(+) + 4 H(+)(out). Functionally, NDH-1 shuttles electrons from NADH, via FMN and iron-sulfur (Fe-S) centers, to quinones in the respiratory chain. The immediate electron acceptor for the enzyme in this species is believed to be ubiquinone. Couples the redox reaction to proton translocation (for every two electrons transferred, four hydrogen ions are translocated across the cytoplasmic membrane), and thus conserves the redox energy in a proton gradient. In Nitrosomonas europaea (strain ATCC 19718 / CIP 103999 / KCTC 2705 / NBRC 14298), this protein is NADH-quinone oxidoreductase subunit I.